The primary structure comprises 154 residues: UPF0178 protein BAV3236 (154 aa).

It belongs to the UPF0178 family.

The protein is UPF0178 protein BAV3236 of Bordetella avium (strain 197N).